Reading from the N-terminus, the 83-residue chain is Cytochrome c oxidase subunit 7A2, mitochondrial (83 aa).

Residues 1-23 (MLRNLLALRQIAQRTISTTSRRH) constitute a mitochondrion transit peptide. Residues 24 to 48 (FENKVPEKQKLFQEDNGMPVHLKGG) lie on the Mitochondrial matrix side of the membrane. N6-acetyllysine is present on K33. A helical membrane pass occupies residues 49 to 77 (ASDALLYRATMALTLGGTAYAIYLLAMAA). The Mitochondrial intermembrane portion of the chain corresponds to 78-83 (FPKKQN).

It belongs to the cytochrome c oxidase VIIa family. In terms of assembly, component of the cytochrome c oxidase (complex IV, CIV), a multisubunit enzyme composed of 14 subunits. The complex is composed of a catalytic core of 3 subunits MT-CO1, MT-CO2 and MT-CO3, encoded in the mitochondrial DNA, and 11 supernumerary subunits COX4I, COX5A, COX5B, COX6A, COX6B, COX6C, COX7A, COX7B, COX7C, COX8 and NDUFA4, which are encoded in the nuclear genome. The complex exists as a monomer or a dimer and forms supercomplexes (SCs) in the inner mitochondrial membrane with NADH-ubiquinone oxidoreductase (complex I, CI) and ubiquinol-cytochrome c oxidoreductase (cytochrome b-c1 complex, complex III, CIII), resulting in different assemblies (supercomplex SCI(1)III(2)IV(1) and megacomplex MCI(2)III(2)IV(2)). Interacts with PET100.

It localises to the mitochondrion inner membrane. Its pathway is energy metabolism; oxidative phosphorylation. Functionally, component of the cytochrome c oxidase, the last enzyme in the mitochondrial electron transport chain which drives oxidative phosphorylation. The respiratory chain contains 3 multisubunit complexes succinate dehydrogenase (complex II, CII), ubiquinol-cytochrome c oxidoreductase (cytochrome b-c1 complex, complex III, CIII) and cytochrome c oxidase (complex IV, CIV), that cooperate to transfer electrons derived from NADH and succinate to molecular oxygen, creating an electrochemical gradient over the inner membrane that drives transmembrane transport and the ATP synthase. Cytochrome c oxidase is the component of the respiratory chain that catalyzes the reduction of oxygen to water. Electrons originating from reduced cytochrome c in the intermembrane space (IMS) are transferred via the dinuclear copper A center (CU(A)) of subunit 2 and heme A of subunit 1 to the active site in subunit 1, a binuclear center (BNC) formed by heme A3 and copper B (CU(B)). The BNC reduces molecular oxygen to 2 water molecules using 4 electrons from cytochrome c in the IMS and 4 protons from the mitochondrial matrix. The chain is Cytochrome c oxidase subunit 7A2, mitochondrial (Cox7a2) from Mus musculus (Mouse).